The sequence spans 546 residues: Probable bifunctional SAT/APS kinase (546 aa).

The sulfate adenylyltransferase stretch occupies residues 1–370 (MEKIKYLKSI…LAETYVPKHK (370 aa)). The adenylsulfate kinase stretch occupies residues 371-546 (QGFCVWLTGL…FLKKEGFIKD (176 aa)). Residue 379–386 (GLPCAGKS) participates in ATP binding. Serine 453 functions as the Phosphoserine intermediate in the catalytic mechanism.

It in the N-terminal section; belongs to the sulfate adenylyltransferase family. The protein in the C-terminal section; belongs to the APS kinase family.

It catalyses the reaction sulfate + ATP + H(+) = adenosine 5'-phosphosulfate + diphosphate. It carries out the reaction adenosine 5'-phosphosulfate + ATP = 3'-phosphoadenylyl sulfate + ADP + H(+). The protein operates within sulfur metabolism; hydrogen sulfide biosynthesis; sulfite from sulfate: step 1/3. It functions in the pathway sulfur metabolism; hydrogen sulfide biosynthesis; sulfite from sulfate: step 2/3. This chain is Probable bifunctional SAT/APS kinase (sat/cysC), found in Aquifex aeolicus (strain VF5).